The sequence spans 682 residues: Amphiphysin (682 aa).

Coiled-coil stretches lie at residues 10–84 (AKNV…LHEV) and 144–191 (DYDS…QEEL). Positions 24-240 (VLQKLGKADE…MTKLGDQHAD (217 aa)) constitute a BAR domain. Disordered regions lie at residues 244-310 (TIQG…PKLT), 446-470 (ILAE…ETTG), 501-530 (GAVR…QEKV), and 561-606 (AAAE…ASDM). Positions 261-274 (PSPPEEVSPLPSPT) are enriched in pro residues. Positions 503 to 527 (VRTEQEAAAEGDKPQGEEKDVDVSQ) are enriched in basic and acidic residues. The segment covering 567-596 (TQGTDSETSQIGSEQKATEEIQTTPSQDQP) has biased composition (polar residues). In terms of domain architecture, SH3 spans 609-682 (GFLFKVEVLH…FPENFTRHLE (74 aa)).

As to quaternary structure, heterodimer with BIN1. Binds SH3GLB1. In terms of tissue distribution, is abundant in the forebrain and cerebellum. It is also found in the adrenal gland, anterior and posterior pituitary.

The protein localises to the cytoplasmic vesicle. It is found in the secretory vesicle. Its subcellular location is the synaptic vesicle membrane. The protein resides in the cytoplasm. It localises to the cytoskeleton. In terms of biological role, may participate in mechanisms of regulated exocytosis in synapses and certain endocrine cell types. May control the properties of the membrane associated cytoskeleton. This Gallus gallus (Chicken) protein is Amphiphysin (AMPH).